A 149-amino-acid chain; its full sequence is D-aminoacyl-tRNA deacylase (149 aa).

Positions 137 to 138 match the Gly-cisPro motif, important for rejection of L-amino acids motif; that stretch reads GP.

The protein belongs to the DTD family. In terms of assembly, homodimer.

The protein localises to the cytoplasm. The catalysed reaction is glycyl-tRNA(Ala) + H2O = tRNA(Ala) + glycine + H(+). It catalyses the reaction a D-aminoacyl-tRNA + H2O = a tRNA + a D-alpha-amino acid + H(+). An aminoacyl-tRNA editing enzyme that deacylates mischarged D-aminoacyl-tRNAs. Also deacylates mischarged glycyl-tRNA(Ala), protecting cells against glycine mischarging by AlaRS. Acts via tRNA-based rather than protein-based catalysis; rejects L-amino acids rather than detecting D-amino acids in the active site. By recycling D-aminoacyl-tRNA to D-amino acids and free tRNA molecules, this enzyme counteracts the toxicity associated with the formation of D-aminoacyl-tRNA entities in vivo and helps enforce protein L-homochirality. This chain is D-aminoacyl-tRNA deacylase, found in Thermotoga petrophila (strain ATCC BAA-488 / DSM 13995 / JCM 10881 / RKU-1).